A 375-amino-acid chain; its full sequence is Probable serine/threonine-protein kinase PBL28 (375 aa).

Phosphothreonine is present on T65. Residues 76-356 enclose the Protein kinase domain; sequence FSDENLLGKG…MDCVKELQLI (281 aa). ATP contacts are provided by residues 82 to 90 and K104; that span reads LGKGGFGRV. Residue Y152 is modified to Phosphotyrosine. D205 (proton acceptor) is an active-site residue. T245 carries the phosphothreonine modification. Position 253 is a phosphotyrosine (Y253).

Belongs to the protein kinase superfamily. Ser/Thr protein kinase family.

It is found in the cell membrane. It catalyses the reaction L-seryl-[protein] + ATP = O-phospho-L-seryl-[protein] + ADP + H(+). It carries out the reaction L-threonyl-[protein] + ATP = O-phospho-L-threonyl-[protein] + ADP + H(+). Its function is as follows. May be involved in plant defense signaling. The chain is Probable serine/threonine-protein kinase PBL28 from Arabidopsis thaliana (Mouse-ear cress).